A 345-amino-acid polypeptide reads, in one-letter code: Histidinol-phosphate aminotransferase (345 aa).

Position 206 is an N6-(pyridoxal phosphate)lysine (Lys-206).

The protein belongs to the class-II pyridoxal-phosphate-dependent aminotransferase family. Histidinol-phosphate aminotransferase subfamily. In terms of assembly, homodimer. Pyridoxal 5'-phosphate is required as a cofactor.

It carries out the reaction L-histidinol phosphate + 2-oxoglutarate = 3-(imidazol-4-yl)-2-oxopropyl phosphate + L-glutamate. It participates in amino-acid biosynthesis; L-histidine biosynthesis; L-histidine from 5-phospho-alpha-D-ribose 1-diphosphate: step 7/9. In Bacteroides fragilis (strain ATCC 25285 / DSM 2151 / CCUG 4856 / JCM 11019 / LMG 10263 / NCTC 9343 / Onslow / VPI 2553 / EN-2), this protein is Histidinol-phosphate aminotransferase.